The following is a 391-amino-acid chain: Elongation factor Tu (391 aa).

Residues 10–201 (KPHVNIGTIG…AVDEYIPTPA (192 aa)) form the tr-type G domain. A G1 region spans residues 19 to 26 (GHVDHGKT). 19-26 (GHVDHGKT) lines the GTP pocket. A Mg(2+)-binding site is contributed by threonine 26. The segment at 55–59 (GITIS) is G2. The segment at 76-79 (DCPG) is G3. Residues 76–80 (DCPGH) and 131–134 (NKVD) each bind GTP. The tract at residues 131 to 134 (NKVD) is G4. The segment at 169-171 (SAL) is G5.

This sequence belongs to the TRAFAC class translation factor GTPase superfamily. Classic translation factor GTPase family. EF-Tu/EF-1A subfamily. Monomer.

It is found in the cytoplasm. It catalyses the reaction GTP + H2O = GDP + phosphate + H(+). Functionally, GTP hydrolase that promotes the GTP-dependent binding of aminoacyl-tRNA to the A-site of ribosomes during protein biosynthesis. This chain is Elongation factor Tu, found in Jannaschia sp. (strain CCS1).